We begin with the raw amino-acid sequence, 35 residues long: Thionin NsW1 (35 aa).

3 disulfides stabilise this stretch: C4–C32, C12–C30, and C16–C26.

Post-translationally, contains 4 disulfide bonds.

The protein localises to the secreted. Functionally, antimicrobial peptide disrupting membranes. Has antibacterial against Gram-positive bacteria S.aureus (MIC=6.5 uM) and B.subtilis (MIC=3.25 uM) but not against Gram-negative bacterium E.coli. Has antifungal activity against C.albicans (MIC=1.63 uM). The sequence is that of Thionin NsW1 from Nigella sativa (Black cumin).